Consider the following 174-residue polypeptide: Inactive signal peptidase IA (174 aa).

At 1-7 the chain is on the cytoplasmic side; that stretch reads MKKVVKY. The helical transmembrane segment at 8–28 threads the bilayer; sequence LISLILAIIIVLFVQTFVIVG. At 29 to 174 the chain is on the extracellular side; that stretch reads HVIPNNDMSP…FSKWTVQFKS (146 aa).

It belongs to the peptidase S26 family.

The protein localises to the cell membrane. Functionally, catalytically inactive. In Staphylococcus aureus (strain COL), this protein is Inactive signal peptidase IA (spsA).